The following is a 354-amino-acid chain: NADH-quinone oxidoreductase subunit H (354 aa).

10 consecutive transmembrane segments (helical) span residues 12-32 (LLGG…LIAP), 62-82 (PWGL…EIIL), 89-109 (GLFL…WVVV), 124-144 (LLFL…AGWA), 162-182 (VSYE…SGTL), 203-223 (FLSW…ISGL), 239-259 (EIVA…FFLA), 263-283 (NMIL…LPPI), 291-311 (IPGW…FLWV), and 326-346 (LGWK…GLWI).

This sequence belongs to the complex I subunit 1 family. As to quaternary structure, NDH-1 is composed of 14 different subunits. Subunits NuoA, H, J, K, L, M, N constitute the membrane sector of the complex.

It localises to the cell inner membrane. It carries out the reaction a quinone + NADH + 5 H(+)(in) = a quinol + NAD(+) + 4 H(+)(out). Functionally, NDH-1 shuttles electrons from NADH, via FMN and iron-sulfur (Fe-S) centers, to quinones in the respiratory chain. The immediate electron acceptor for the enzyme in this species is believed to be ubiquinone. Couples the redox reaction to proton translocation (for every two electrons transferred, four hydrogen ions are translocated across the cytoplasmic membrane), and thus conserves the redox energy in a proton gradient. This subunit may bind ubiquinone. The chain is NADH-quinone oxidoreductase subunit H from Methylibium petroleiphilum (strain ATCC BAA-1232 / LMG 22953 / PM1).